The sequence spans 142 residues: MKTLSAKPAEVTHDWYVVDADGKTLGRLATQIATRLRGKHKTCFTPHVDTGDFIVVINAEKIAVTGKKAQDKKYYRHSGYPGGIKETNFTKLIAHKPEDVLHKAVKGMLPKGPLGYAMIKKLKLYAGTEHPHEAQQPKELDI.

This sequence belongs to the universal ribosomal protein uL13 family. In terms of assembly, part of the 50S ribosomal subunit.

Its function is as follows. This protein is one of the early assembly proteins of the 50S ribosomal subunit, although it is not seen to bind rRNA by itself. It is important during the early stages of 50S assembly. This Psychrobacter arcticus (strain DSM 17307 / VKM B-2377 / 273-4) protein is Large ribosomal subunit protein uL13.